We begin with the raw amino-acid sequence, 463 residues long: Phosphoglucosamine mutase (463 aa).

Ser-102 (phosphoserine intermediate) is an active-site residue. 4 residues coordinate Mg(2+): Ser-102, Asp-240, Asp-242, and Asp-244. Ser-102 carries the post-translational modification Phosphoserine.

This sequence belongs to the phosphohexose mutase family. Mg(2+) serves as cofactor. In terms of processing, activated by phosphorylation.

The catalysed reaction is alpha-D-glucosamine 1-phosphate = D-glucosamine 6-phosphate. Catalyzes the conversion of glucosamine-6-phosphate to glucosamine-1-phosphate. This chain is Phosphoglucosamine mutase, found in Mycobacterium leprae (strain Br4923).